Here is a 302-residue protein sequence, read N- to C-terminus: Pseudouridine-5'-phosphate glycosidase (302 aa).

Glutamate 25 serves as the catalytic Proton donor. Lysine 86 and valine 106 together coordinate substrate. Aspartate 138 contributes to the Mn(2+) binding site. 140–142 (SAD) contacts substrate. The Nucleophile role is filled by lysine 159.

Belongs to the pseudouridine-5'-phosphate glycosidase family. As to quaternary structure, homotrimer. Requires Mn(2+) as cofactor.

It catalyses the reaction D-ribose 5-phosphate + uracil = psi-UMP + H2O. Catalyzes the reversible cleavage of pseudouridine 5'-phosphate (PsiMP) to ribose 5-phosphate and uracil. Functions biologically in the cleavage direction, as part of a pseudouridine degradation pathway. This chain is Pseudouridine-5'-phosphate glycosidase, found in Glaesserella parasuis serovar 5 (strain SH0165) (Haemophilus parasuis).